Reading from the N-terminus, the 417-residue chain is Serine hydroxymethyltransferase (417 aa).

The residue at position 54 (K54) is an N6-acetyllysine. (6S)-5,6,7,8-tetrahydrofolate-binding positions include L121 and 125 to 127; that span reads GHL. At K229 the chain carries N6-(pyridoxal phosphate)lysine. 3 positions are modified to N6-acetyllysine: K250, K285, and K354. 355 to 357 contacts (6S)-5,6,7,8-tetrahydrofolate; sequence SPF. K375 carries the N6-acetyllysine modification.

This sequence belongs to the SHMT family. In terms of assembly, homodimer. It depends on pyridoxal 5'-phosphate as a cofactor.

Its subcellular location is the cytoplasm. The enzyme catalyses (6R)-5,10-methylene-5,6,7,8-tetrahydrofolate + glycine + H2O = (6S)-5,6,7,8-tetrahydrofolate + L-serine. It participates in one-carbon metabolism; tetrahydrofolate interconversion. The protein operates within amino-acid biosynthesis; glycine biosynthesis; glycine from L-serine: step 1/1. Functionally, catalyzes the reversible interconversion of serine and glycine with tetrahydrofolate (THF) serving as the one-carbon carrier. This reaction serves as the major source of one-carbon groups required for the biosynthesis of purines, thymidylate, methionine, and other important biomolecules. Also exhibits THF-independent aldolase activity toward beta-hydroxyamino acids, producing glycine and aldehydes, via a retro-aldol mechanism. This is Serine hydroxymethyltransferase from Escherichia coli O17:K52:H18 (strain UMN026 / ExPEC).